The sequence spans 157 residues: Small ribosomal subunit protein uS7 (157 aa).

The protein belongs to the universal ribosomal protein uS7 family. As to quaternary structure, part of the 30S ribosomal subunit. Contacts proteins S9 and S11.

In terms of biological role, one of the primary rRNA binding proteins, it binds directly to 16S rRNA where it nucleates assembly of the head domain of the 30S subunit. Is located at the subunit interface close to the decoding center, probably blocks exit of the E-site tRNA. This Francisella tularensis subsp. holarctica (strain OSU18) protein is Small ribosomal subunit protein uS7.